Consider the following 483-residue polypeptide: tRNA sulfurtransferase (483 aa).

Residues 62–166 (PEICDALTRI…QDKLILVKAR (105 aa)) form the THUMP domain. Residues 184–185 (LI), K266, G288, and Q297 each bind ATP. The cysteines at positions 345 and 457 are disulfide-linked. In terms of domain architecture, Rhodanese spans 405–483 (LADTDVLLDI…GYTNVKVYRP (79 aa)). C457 acts as the Cysteine persulfide intermediate in catalysis.

The protein belongs to the ThiI family.

The protein resides in the cytoplasm. The catalysed reaction is [ThiI sulfur-carrier protein]-S-sulfanyl-L-cysteine + a uridine in tRNA + 2 reduced [2Fe-2S]-[ferredoxin] + ATP + H(+) = [ThiI sulfur-carrier protein]-L-cysteine + a 4-thiouridine in tRNA + 2 oxidized [2Fe-2S]-[ferredoxin] + AMP + diphosphate. It catalyses the reaction [ThiS sulfur-carrier protein]-C-terminal Gly-Gly-AMP + S-sulfanyl-L-cysteinyl-[cysteine desulfurase] + AH2 = [ThiS sulfur-carrier protein]-C-terminal-Gly-aminoethanethioate + L-cysteinyl-[cysteine desulfurase] + A + AMP + 2 H(+). The protein operates within cofactor biosynthesis; thiamine diphosphate biosynthesis. Catalyzes the ATP-dependent transfer of a sulfur to tRNA to produce 4-thiouridine in position 8 of tRNAs, which functions as a near-UV photosensor. Also catalyzes the transfer of sulfur to the sulfur carrier protein ThiS, forming ThiS-thiocarboxylate. This is a step in the synthesis of thiazole, in the thiamine biosynthesis pathway. The sulfur is donated as persulfide by IscS. The protein is tRNA sulfurtransferase of Yersinia pseudotuberculosis serotype O:1b (strain IP 31758).